Consider the following 270-residue polypeptide: 5'-AMP-activated protein kinase subunit beta-1 (270 aa).

Positions 1–46 (MGNTSSERAALERHGGHKTPRRDSSGGTKDGDRPKILMDSPEDADL) are disordered. Gly-2 is lipidated: N-myristoyl glycine. Thr-4 is modified (phosphothreonine). Residues Ser-5 and Ser-6 each carry the phosphoserine modification. Thr-19 is modified (phosphothreonine). Positions 21 to 36 (RRDSSGGTKDGDRPKI) are enriched in basic and acidic residues. Residues Ser-24 and Ser-25 each carry the phosphoserine; by autocatalysis modification. Phosphoserine occurs at positions 40, 96, and 101. Positions 68–163 (EVNDKAPAQA…QVKKTDFEVF (96 aa)) are glycogen-binding domain. Ser-108 bears the Phosphoserine; by autocatalysis mark. Thr-148 is modified (phosphothreonine). Residue Ser-182 is modified to Phosphoserine.

The protein belongs to the 5'-AMP-activated protein kinase beta subunit family. In terms of assembly, AMPK is a heterotrimer of an alpha catalytic subunit (PRKAA1 or PRKAA2), a beta (PRKAB1 or PRKAB2) and a gamma non-catalytic subunits (PRKAG1, PRKAG2 or PRKAG3). Interacts with FNIP1 and FNIP2. Phosphorylated when associated with the catalytic subunit (PRKAA1 or PRKAA2). Phosphorylated by ULK1; leading to negatively regulate AMPK activity and suggesting the existence of a regulatory feedback loop between ULK1 and AMPK.

Its function is as follows. Non-catalytic subunit of AMP-activated protein kinase (AMPK), an energy sensor protein kinase that plays a key role in regulating cellular energy metabolism. In response to reduction of intracellular ATP levels, AMPK activates energy-producing pathways and inhibits energy-consuming processes: inhibits protein, carbohydrate and lipid biosynthesis, as well as cell growth and proliferation. AMPK acts via direct phosphorylation of metabolic enzymes, and by longer-term effects via phosphorylation of transcription regulators. Also acts as a regulator of cellular polarity by remodeling the actin cytoskeleton; probably by indirectly activating myosin. Beta non-catalytic subunit acts as a scaffold on which the AMPK complex assembles, via its C-terminus that bridges alpha (PRKAA1 or PRKAA2) and gamma subunits (PRKAG1, PRKAG2 or PRKAG3). In Pongo abelii (Sumatran orangutan), this protein is 5'-AMP-activated protein kinase subunit beta-1 (PRKAB1).